The following is a 614-amino-acid chain: 1-deoxy-D-xylulose-5-phosphate synthase (614 aa).

Thiamine diphosphate contacts are provided by residues H74 and 115 to 117 (AHS). D146 serves as a coordination point for Mg(2+). Thiamine diphosphate is bound by residues 147–148 (GA), N175, Y282, and E363. Residue N175 coordinates Mg(2+).

The protein belongs to the transketolase family. DXPS subfamily. Homodimer. The cofactor is Mg(2+). Thiamine diphosphate is required as a cofactor.

It catalyses the reaction D-glyceraldehyde 3-phosphate + pyruvate + H(+) = 1-deoxy-D-xylulose 5-phosphate + CO2. The protein operates within metabolic intermediate biosynthesis; 1-deoxy-D-xylulose 5-phosphate biosynthesis; 1-deoxy-D-xylulose 5-phosphate from D-glyceraldehyde 3-phosphate and pyruvate: step 1/1. In terms of biological role, catalyzes the acyloin condensation reaction between C atoms 2 and 3 of pyruvate and glyceraldehyde 3-phosphate to yield 1-deoxy-D-xylulose-5-phosphate (DXP). The sequence is that of 1-deoxy-D-xylulose-5-phosphate synthase from Nitrosomonas europaea (strain ATCC 19718 / CIP 103999 / KCTC 2705 / NBRC 14298).